The chain runs to 91 residues: Lipolysis-activating peptide 1-alpha chain (91 aa).

The signal sequence occupies residues 1 to 21; the sequence is MNIKLFCFLSILISLTGLSLS. One can recognise an LCN-type CS-alpha/beta domain in the interval 23-87; that stretch reads DDGNYPIDAN…FFDAYKTYCK (65 aa). Cystine bridges form between Cys38/Cys61, Cys47/Cys66, and Cys51/Cys68.

The protein belongs to the long (3 C-C) scorpion toxin superfamily. Heterodimer of this alpha chain and a beta chain (AC D9U2A2). As to expression, expressed by the venom gland.

Its subcellular location is the secreted. Functionally, the heterodimer LVP1 induces lipolysis in rat adipocytes. Induction of lipolysis by LVP1 appears to be mediated through the beta-2 adrenergic receptor pathway (ADRB2). This Lychas mucronatus (Chinese swimming scorpion) protein is Lipolysis-activating peptide 1-alpha chain.